Consider the following 359-residue polypeptide: Probable dual-specificity RNA methyltransferase RlmN (359 aa).

Catalysis depends on E91, which acts as the Proton acceptor. One can recognise a Radical SAM core domain in the interval 97–335; that stretch reads QHYGHSVCVT…CVVRQEHGTD (239 aa). C104 and C340 are disulfide-bonded. 3 residues coordinate [4Fe-4S] cluster: C111, C115, and C118. S-adenosyl-L-methionine is bound by residues 163 to 164, S195, 218 to 220, and N296; these read GE and SLH. C340 acts as the S-methylcysteine intermediate in catalysis.

The protein belongs to the radical SAM superfamily. RlmN family. Requires [4Fe-4S] cluster as cofactor.

The protein resides in the cytoplasm. The enzyme catalyses adenosine(2503) in 23S rRNA + 2 reduced [2Fe-2S]-[ferredoxin] + 2 S-adenosyl-L-methionine = 2-methyladenosine(2503) in 23S rRNA + 5'-deoxyadenosine + L-methionine + 2 oxidized [2Fe-2S]-[ferredoxin] + S-adenosyl-L-homocysteine. It carries out the reaction adenosine(37) in tRNA + 2 reduced [2Fe-2S]-[ferredoxin] + 2 S-adenosyl-L-methionine = 2-methyladenosine(37) in tRNA + 5'-deoxyadenosine + L-methionine + 2 oxidized [2Fe-2S]-[ferredoxin] + S-adenosyl-L-homocysteine. Its function is as follows. Specifically methylates position 2 of adenine 2503 in 23S rRNA and position 2 of adenine 37 in tRNAs. In Streptococcus pyogenes serotype M12 (strain MGAS2096), this protein is Probable dual-specificity RNA methyltransferase RlmN.